The sequence spans 102 residues: Small ribosomal subunit protein uS10 (102 aa).

Belongs to the universal ribosomal protein uS10 family. Part of the 30S ribosomal subunit.

Involved in the binding of tRNA to the ribosomes. The polypeptide is Small ribosomal subunit protein uS10 (Saccharolobus islandicus (strain M.16.4 / Kamchatka #3) (Sulfolobus islandicus)).